Here is a 310-residue protein sequence, read N- to C-terminus: p-hydroxybenzoic acid efflux pump subunit AaeA (310 aa).

The helical transmembrane segment at 12-32 threads the bilayer; sequence AITVVLVILAFIAIFNAWVYY.

It belongs to the membrane fusion protein (MFP) (TC 8.A.1) family.

Its subcellular location is the cell inner membrane. In terms of biological role, forms an efflux pump with AaeB. The sequence is that of p-hydroxybenzoic acid efflux pump subunit AaeA from Shigella flexneri.